Here is a 205-residue protein sequence, read N- to C-terminus: Putative 3-methyladenine DNA glycosylase (205 aa).

Belongs to the DNA glycosylase MPG family.

This Staphylococcus epidermidis (strain ATCC 35984 / DSM 28319 / BCRC 17069 / CCUG 31568 / BM 3577 / RP62A) protein is Putative 3-methyladenine DNA glycosylase.